Consider the following 186-residue polypeptide: Peptidyl-tRNA hydrolase (186 aa).

Tyrosine 14 provides a ligand contact to tRNA. Histidine 19 functions as the Proton acceptor in the catalytic mechanism. Residues tyrosine 61, asparagine 63, and asparagine 107 each contribute to the tRNA site.

This sequence belongs to the PTH family. Monomer.

The protein resides in the cytoplasm. The enzyme catalyses an N-acyl-L-alpha-aminoacyl-tRNA + H2O = an N-acyl-L-amino acid + a tRNA + H(+). Functionally, hydrolyzes ribosome-free peptidyl-tRNAs (with 1 or more amino acids incorporated), which drop off the ribosome during protein synthesis, or as a result of ribosome stalling. Catalyzes the release of premature peptidyl moieties from peptidyl-tRNA molecules trapped in stalled 50S ribosomal subunits, and thus maintains levels of free tRNAs and 50S ribosomes. The polypeptide is Peptidyl-tRNA hydrolase (Helicobacter acinonychis (strain Sheeba)).